Consider the following 310-residue polypeptide: Leucine carboxyl methyltransferase 1 (310 aa).

S-adenosyl-L-methionine is bound by residues R50, G75, D100, D145–I146, and E169.

Belongs to the methyltransferase superfamily. LCMT family.

It catalyses the reaction [phosphatase 2A protein]-C-terminal L-leucine + S-adenosyl-L-methionine = [phosphatase 2A protein]-C-terminal L-leucine methyl ester + S-adenosyl-L-homocysteine. Methylates the carboxyl group of the C-terminal leucine residue of protein phosphatase 2A catalytic subunits to form alpha-leucine ester residues. The chain is Leucine carboxyl methyltransferase 1 (ppm1) from Schizosaccharomyces pombe (strain 972 / ATCC 24843) (Fission yeast).